Reading from the N-terminus, the 173-residue chain is Ribosome maturation factor RimP (173 aa).

This sequence belongs to the RimP family.

It localises to the cytoplasm. Its function is as follows. Required for maturation of 30S ribosomal subunits. The chain is Ribosome maturation factor RimP from Chlorobaculum tepidum (strain ATCC 49652 / DSM 12025 / NBRC 103806 / TLS) (Chlorobium tepidum).